We begin with the raw amino-acid sequence, 661 residues long: UvrABC system protein B (661 aa).

A Helicase ATP-binding domain is found at 26–413 (KGIQEGKKHQ…TDEMVEQIIR (388 aa)). 39-46 (GATGTGKT) lines the ATP pocket. The Beta-hairpin motif lies at 92–115 (YYDYYQPEAYVPQTDTFIEKDASI). Residues 430–596 (QIDDLIGEIQ…TINKEIRDVI (167 aa)) enclose the Helicase C-terminal domain. Positions 625 to 660 (QKVVEQMEHEMKEAAKALDFERAAELRDLLLELKAE) constitute a UVR domain.

It belongs to the UvrB family. Forms a heterotetramer with UvrA during the search for lesions. Interacts with UvrC in an incision complex.

Its subcellular location is the cytoplasm. In terms of biological role, the UvrABC repair system catalyzes the recognition and processing of DNA lesions. A damage recognition complex composed of 2 UvrA and 2 UvrB subunits scans DNA for abnormalities. Upon binding of the UvrA(2)B(2) complex to a putative damaged site, the DNA wraps around one UvrB monomer. DNA wrap is dependent on ATP binding by UvrB and probably causes local melting of the DNA helix, facilitating insertion of UvrB beta-hairpin between the DNA strands. Then UvrB probes one DNA strand for the presence of a lesion. If a lesion is found the UvrA subunits dissociate and the UvrB-DNA preincision complex is formed. This complex is subsequently bound by UvrC and the second UvrB is released. If no lesion is found, the DNA wraps around the other UvrB subunit that will check the other stand for damage. The sequence is that of UvrABC system protein B from Bacillus subtilis (strain 168).